Reading from the N-terminus, the 340-residue chain is Fructose-bisphosphate aldolase (340 aa).

Ser-53 is a binding site for D-glyceraldehyde 3-phosphate. Asp-95 (proton donor) is an active-site residue. 4 residues coordinate Zn(2+): His-96, Asp-131, Glu-161, and His-212. Gly-213 serves as a coordination point for dihydroxyacetone phosphate. Position 249 (His-249) interacts with Zn(2+). Dihydroxyacetone phosphate is bound by residues 250-252 and 271-274; these read GGS and NLDT.

It belongs to the class II fructose-bisphosphate aldolase family. It depends on Zn(2+) as a cofactor.

The catalysed reaction is beta-D-fructose 1,6-bisphosphate = D-glyceraldehyde 3-phosphate + dihydroxyacetone phosphate. Its pathway is carbohydrate degradation; glycolysis; D-glyceraldehyde 3-phosphate and glycerone phosphate from D-glucose: step 4/4. Functionally, catalyzes the aldol condensation of dihydroxyacetone phosphate (DHAP or glycerone-phosphate) with glyceraldehyde 3-phosphate (G3P) to form fructose 1,6-bisphosphate (FBP) in gluconeogenesis and the reverse reaction in glycolysis. This is Fructose-bisphosphate aldolase (fba) from Streptomyces galbus.